A 71-amino-acid polypeptide reads, in one-letter code: Antitoxin ParD2 (71 aa).

Its function is as follows. Antitoxin component of a type II toxin-antitoxin (TA) system. This chain is Antitoxin ParD2 (parD2), found in Mycobacterium tuberculosis (strain CDC 1551 / Oshkosh).